We begin with the raw amino-acid sequence, 226 residues long: Protein GrpE (226 aa).

Disordered stretches follow at residues 1-31 (MTPNDTENAARPLPEGAVDPAQDAAGAPDTL) and 189-226 (VSKGGPKAAEASKPAGEAPKPAGEAPKPAGDGQKPAEA). Residues 192 to 218 (GGPKAAEASKPAGEAPKPAGEAPKPAG) show a composition bias toward low complexity.

It belongs to the GrpE family. Homodimer.

Its subcellular location is the cytoplasm. Participates actively in the response to hyperosmotic and heat shock by preventing the aggregation of stress-denatured proteins, in association with DnaK and GrpE. It is the nucleotide exchange factor for DnaK and may function as a thermosensor. Unfolded proteins bind initially to DnaJ; upon interaction with the DnaJ-bound protein, DnaK hydrolyzes its bound ATP, resulting in the formation of a stable complex. GrpE releases ADP from DnaK; ATP binding to DnaK triggers the release of the substrate protein, thus completing the reaction cycle. Several rounds of ATP-dependent interactions between DnaJ, DnaK and GrpE are required for fully efficient folding. This Methylobacterium nodulans (strain LMG 21967 / CNCM I-2342 / ORS 2060) protein is Protein GrpE.